The primary structure comprises 192 residues: Erythropoietin (192 aa).

The first 26 residues, 1-26 (MGVPDCLALPLLVTFLLLSLGLPVLG), serve as a signal peptide directing secretion. A disulfide bridge connects residues Cys33 and Cys187. N-linked (GlcNAc...) asparagine glycans are attached at residues Asn50, Asn64, and Asn109.

The protein belongs to the EPO/TPO family.

Its subcellular location is the secreted. Its function is as follows. Hormone involved in the regulation of erythrocyte proliferation and differentiation and the maintenance of a physiological level of circulating erythrocyte mass. Binds to EPOR leading to EPOR dimerization and JAK2 activation thereby activating specific downstream effectors, including STAT1 and STAT3. This chain is Erythropoietin (EPO), found in Nannospalax galili (Northern Israeli blind subterranean mole rat).